A 194-amino-acid chain; its full sequence is Peptidyl-tRNA hydrolase (194 aa).

Tyr17 is a tRNA binding site. The active-site Proton acceptor is the His22. Positions 68, 70, and 116 each coordinate tRNA.

The protein belongs to the PTH family. As to quaternary structure, monomer.

The protein localises to the cytoplasm. It carries out the reaction an N-acyl-L-alpha-aminoacyl-tRNA + H2O = an N-acyl-L-amino acid + a tRNA + H(+). Hydrolyzes ribosome-free peptidyl-tRNAs (with 1 or more amino acids incorporated), which drop off the ribosome during protein synthesis, or as a result of ribosome stalling. In terms of biological role, catalyzes the release of premature peptidyl moieties from peptidyl-tRNA molecules trapped in stalled 50S ribosomal subunits, and thus maintains levels of free tRNAs and 50S ribosomes. This is Peptidyl-tRNA hydrolase from Histophilus somni (strain 129Pt) (Haemophilus somnus).